The chain runs to 143 residues: Hemoglobin-1 (143 aa).

Serine 2 carries the N-acetylserine modification. A Globin domain is found at 2-143; sequence SLSAAQKDNV…ALMGMIRPNM (142 aa). Histidine 97 contributes to the heme b binding site.

Belongs to the globin family. In terms of assembly, monomer.

It localises to the cytoplasm. Serves to transport hydrogen sulfide to autotrophic bacteria. The chain is Hemoglobin-1 from Phacoides pectinatus (Thick lucine).